The sequence spans 501 residues: Aerobic glycerol-3-phosphate dehydrogenase (501 aa).

5 to 33 (DLIVIGGGINGAGIAADAAGRGLSVLMLE) is a binding site for FAD.

It belongs to the FAD-dependent glycerol-3-phosphate dehydrogenase family. The cofactor is FAD.

The protein localises to the cytoplasm. It catalyses the reaction a quinone + sn-glycerol 3-phosphate = dihydroxyacetone phosphate + a quinol. It participates in polyol metabolism; glycerol degradation via glycerol kinase pathway; glycerone phosphate from sn-glycerol 3-phosphate (aerobic route): step 1/1. Its function is as follows. Conversion of glycerol 3-phosphate to dihydroxyacetone. Uses molecular oxygen or nitrate as electron acceptor. This is Aerobic glycerol-3-phosphate dehydrogenase (glpD) from Escherichia coli (strain K12).